Consider the following 1127-residue polypeptide: DNA-directed RNA polymerase I subunit RPA2 homolog (1127 aa).

Serine 1025 is modified (phosphoserine).

It belongs to the RNA polymerase beta chain family. Component of the RNA polymerase I (Pol I) complex consisting of at least 13 subunits.

The protein resides in the nucleus. It is found in the nucleolus. It catalyses the reaction RNA(n) + a ribonucleoside 5'-triphosphate = RNA(n+1) + diphosphate. Antisense ribosomal siRNAs silence rRNA expression during the elongation phase by decreasing rpoa-2 occupancy downstream of the RNAi-targeted region in nrde-2-dependent manner. Functionally, DNA-dependent RNA polymerase catalyzes the transcription of DNA into RNA using the four ribonucleoside triphosphates as substrates. Second largest core component of RNA polymerase I which synthesizes ribosomal RNA precursors. Proposed to contribute to the polymerase catalytic activity and forms the polymerase active center together with the largest subunit. Pol I is composed of mobile elements and RPA2 is part of the core element with the central large cleft and probably a clamp element that moves to open and close the cleft. Specifically binds to 18S, 5.8S and 26S rDNA, but not to 5S rDNA. This is DNA-directed RNA polymerase I subunit RPA2 homolog from Caenorhabditis elegans.